Reading from the N-terminus, the 149-residue chain is Calmodulin (149 aa).

N-acetylalanine is present on Ala2. EF-hand domains are found at residues 8–43 (EQISEFKEAFSLFDKDGDGTITTKELGTVMRSLGQN), 44–79 (PTEAELQDMINEIDTDGNGTIDFPEFLTLMARKLKD), 81–116 (DTEEELIEAFRVFDRDGDGYISADELRHVMTNLGEK), and 117–149 (LTNEEVDEMIREADIDGDGQINYEEFVKMMIAK). Ca(2+) contacts are provided by Asp21, Asp23, Asp25, Thr27, Glu32, Asp57, Asp59, Asn61, Thr63, Glu68, Asp94, Asp96, Asp98, Tyr100, Glu105, Asp130, Asp132, Asp134, Gln136, and Glu141.

It belongs to the calmodulin family.

It is found in the cytoplasm. In terms of biological role, calmodulin mediates the control of a large number of enzymes, ion channels and other proteins by Ca(2+). Among the enzymes to be stimulated by the calmodulin-Ca(2+) complex are a number of protein kinases and phosphatases. This is Calmodulin from Plasmodium falciparum (isolate 3D7).